Here is a 399-residue protein sequence, read N- to C-terminus: Protein LIGULELESS 1 (399 aa).

The disordered stretch occupies residues Met1 to Pro28. Residues Pro15 to Ala24 are compositionally biased toward low complexity. The SBP-type zinc finger occupies Pro182–Ser260. Cys185, Cys190, Cys207, His210, Cys227, Cys230, His234, and Cys246 together coordinate Zn(2+). Residues Lys243 to Lys259 carry the Bipartite nuclear localization signal motif. The segment at Leu250 to Met292 is disordered. Residues Lys261 to Lys270 are compositionally biased toward basic and acidic residues.

As to expression, leaf ligular region, blade and sheath.

The protein resides in the nucleus. Its function is as follows. Involved in the formation of ligules and auricles during leaf organogenesis. In Zea mays (Maize), this protein is Protein LIGULELESS 1 (LG1).